A 908-amino-acid chain; its full sequence is Protein translocase subunit SecA (908 aa).

ATP contacts are provided by residues Gln87, 105 to 109 (GEGKT), and Asp512. The tract at residues 882–908 (DGEKVGRNDPCPCGSGKKYKQCHGKLT) is disordered. The Zn(2+) site is built by Cys892, Cys894, Cys903, and His904. Positions 898 to 908 (KKYKQCHGKLT) are enriched in basic residues.

It belongs to the SecA family. As to quaternary structure, monomer and homodimer. Part of the essential Sec protein translocation apparatus which comprises SecA, SecYEG and auxiliary proteins SecDF-YajC and YidC. Zn(2+) serves as cofactor.

It localises to the cell inner membrane. The protein resides in the cytoplasm. The enzyme catalyses ATP + H2O + cellular proteinSide 1 = ADP + phosphate + cellular proteinSide 2.. In terms of biological role, part of the Sec protein translocase complex. Interacts with the SecYEG preprotein conducting channel. Has a central role in coupling the hydrolysis of ATP to the transfer of proteins into and across the cell membrane, serving both as a receptor for the preprotein-SecB complex and as an ATP-driven molecular motor driving the stepwise translocation of polypeptide chains across the membrane. The chain is Protein translocase subunit SecA from Shewanella amazonensis (strain ATCC BAA-1098 / SB2B).